We begin with the raw amino-acid sequence, 323 residues long: tRNA U34 carboxymethyltransferase (323 aa).

Carboxy-S-adenosyl-L-methionine is bound by residues K91, W105, K110, G130, 152–154, 181–182, M196, Y200, and R315; these read DPT and IE.

It belongs to the class I-like SAM-binding methyltransferase superfamily. CmoB family. In terms of assembly, homotetramer.

It catalyses the reaction carboxy-S-adenosyl-L-methionine + 5-hydroxyuridine(34) in tRNA = 5-carboxymethoxyuridine(34) in tRNA + S-adenosyl-L-homocysteine + H(+). Its function is as follows. Catalyzes carboxymethyl transfer from carboxy-S-adenosyl-L-methionine (Cx-SAM) to 5-hydroxyuridine (ho5U) to form 5-carboxymethoxyuridine (cmo5U) at position 34 in tRNAs. This is tRNA U34 carboxymethyltransferase from Escherichia coli (strain SE11).